We begin with the raw amino-acid sequence, 372 residues long: 3-galactosyl-N-acetylglucosaminide 4-alpha-L-fucosyltransferase FUT3 (372 aa).

Topologically, residues 1–15 are cytoplasmic; sequence MDPLGAAKPQWPWRR. Residues 16 to 34 form a helical; Signal-anchor for type II membrane protein membrane-spanning segment; the sequence is CLAALLFQLLVAVCFFSYL. The Lumenal portion of the chain corresponds to 35–372; it reads RVSRDDATGS…TMRSIAAWFT (338 aa). The interval 40-69 is disordered; the sequence is DATGSPRPGLMAVEPVTGAPSGSSRQDTTP. Asparagine 165 and asparagine 196 each carry an N-linked (GlcNAc...) asparagine glycan.

Belongs to the glycosyltransferase 10 family. Glycosylated.

The protein localises to the golgi apparatus. It localises to the golgi stack membrane. It catalyses the reaction a beta-D-galactosyl-(1-&gt;3)-N-acetyl-beta-D-glucosaminyl derivative + GDP-beta-L-fucose = a beta-D-galactosyl-(1-&gt;3)-[alpha-L-fucosyl-(1-&gt;4)]-N-acetyl-beta-D-glucosaminyl derivative + GDP + H(+). The catalysed reaction is an N-acetyl-alpha-neuraminyl-(2-&gt;3)-beta-D-galactosyl-(1-&gt;4)-N-acetyl-beta-D-glucosaminyl derivative + GDP-beta-L-fucose = an alpha-Neu5Ac-(2-&gt;3)-beta-D-Gal-(1-&gt;4)-[alpha-L-Fuc-(1-&gt;3)]-beta-D-GlcNAc derivative + GDP + H(+). It carries out the reaction a beta-D-galactosyl-(1-&gt;4)-N-acetyl-beta-D-glucosaminyl derivative + GDP-beta-L-fucose = a beta-D-galactosyl-(1-&gt;4)-[alpha-L-fucosyl-(1-&gt;3)]-N-acetyl-beta-D-glucosaminyl derivative + GDP + H(+). The enzyme catalyses an alpha-Neu5Ac-(2-&gt;3)-beta-D-Gal-(1-&gt;4)-beta-D-GlcNAc-(1-&gt;3)-beta-D-Gal-(1-&gt;4)-[alpha-L-Fuc-(1-&gt;3)]-beta-D-GlcNAc derivative + GDP-beta-L-fucose = an alpha-Neu5Ac-(2-&gt;3)-beta-D-Gal-(1-&gt;4)-[alpha-L-Fuc-(1-&gt;3)]-beta-D-GlcNAc-(1-&gt;3)-beta-D-Gal-(1-&gt;4)-[alpha-L-Fuc-(1-&gt;3)]-beta-D-GlcNAc derivative + GDP + H(+). It catalyses the reaction Lc4Cer + GDP-beta-L-fucose = a lactoside III(4)-a-Fuc-Lc4Cer + GDP + H(+). The catalysed reaction is a beta-D-Gal-(1-&gt;3)-beta-D-GlcNAc-(1-&gt;3)-beta-D-Gal-(1-&gt;4)-beta-D-Glc-(1&lt;-&gt;1')-Cer(d18:1(4E)) + GDP-beta-L-fucose = a III(4)-a-Fuc-Lc4Cer(d18:1(4E)) + GDP + H(+). It carries out the reaction N-acetyl-alpha-neuraminosyl-(2-&gt;3)-beta-D-galactosyl-(1-&gt;3)-[N-acetyl-alpha-neuraminosyl-(2-&gt;6)]-N-acetyl-beta-D-glucosaminyl-(1-&gt;3)-beta-D-galactosyl-(1-&gt;4)-beta-D-glucosyl-(1&lt;-&gt;1')-N-acyl-sphing-4-enine + GDP-beta-L-fucose = N-acetyl-alpha-neuraminosyl-(2-&gt;3)-beta-D-galactosyl-(1-&gt;3)-alpha-L-fucosyl-(1-&gt;4)-[N-acetyl-alpha-neuraminosyl-(2-&gt;6)-N-acetyl-beta-D-glucosaminyl-(1-&gt;3)]-beta-D-galactosyl-(1-&gt;4)-beta-D-glucosyl-(1&lt;-&gt;1')-N-acyl-sphing-4-enine + GDP + H(+). The enzyme catalyses N-acetyl-alpha-neuraminosyl-(2-&gt;3)-beta-D-galactosyl-(1-&gt;3)-N-acetyl-beta-D-glucosaminyl-(1-&gt;3)-beta-D-galactosyl-(1-&gt;4)-beta-D-glucosyl-(1&lt;-&gt;1')-N-acyl-sphing-4-enine + GDP-beta-L-fucose = N-acetyl-alpha-neuraminosyl-(2-&gt;3)-beta-D-galactosyl-(1-&gt;3)-alpha-L-fucosyl-(1-&gt;4)-[N-acetyl-beta-D-glucosaminyl-(1-&gt;3)]-beta-D-galactosyl-(1-&gt;4)-beta-D-glucosyl-(1&lt;-&gt;1')-N-acyl-sphing-4-enine + GDP + H(+). It catalyses the reaction beta-D-galactosyl-(1-&gt;3)-N-acetyl-D-glucosamine + GDP-beta-L-fucose = beta-D-galactosyl-(1-&gt;3)-[alpha-L-fucosyl-(1-&gt;4)]-N-acetyl-D-glucosamine + GDP + H(+). The catalysed reaction is alpha-L-Fuc-(1-&gt;2)-beta-D-Gal-(1-&gt;3)-D-GlcNAc + GDP-beta-L-fucose = alpha-L-Fuc-(1-&gt;2)-beta-D-Gal-(1-&gt;3)-[alpha-L-Fuc-(1-&gt;4)]-D-GlcNAc + GDP + H(+). It carries out the reaction alpha-L-Fuc-(1-&gt;2)-beta-D-Gal-(1-&gt;4)-D-GlcNAc + GDP-beta-L-fucose = alpha-L-Fuc-(1-&gt;2)-beta-D-Gal-(1-&gt;4)-[alpha-L-Fuc-(1-&gt;3)]-D-GlcNAc + GDP + H(+). The enzyme catalyses beta-D-galactosyl-(1-&gt;4)-N-acetyl-D-glucosamine + GDP-beta-L-fucose = beta-D-galactosyl-(1-&gt;4)-[alpha-L-fucosyl-(1-&gt;3)]-N-acetyl-D-glucosamine + GDP + H(+). It catalyses the reaction lactose + GDP-beta-L-fucose = beta-D-galactosyl-(1-&gt;4)-[alpha-L-fucosyl-(1-&gt;3)]-D-glucose + GDP + H(+). The catalysed reaction is an alpha-Neu5Ac-(2-&gt;3)-beta-D-Gal-(1-&gt;3)-D-GlcNAc derivative + GDP-beta-L-fucose = an alpha-Neu5Ac-(2-&gt;3)-beta-D-Gal-(1-&gt;3)-[alpha-L-Fuc-(1-&gt;4)]-beta-D-GlcNAc derivative + GDP + H(+). It functions in the pathway protein modification; protein glycosylation. Its function is as follows. Catalyzes the transfer of L-fucose, from a guanosine diphosphate-beta-L-fucose, to both the subterminal N-acetyl glucosamine (GlcNAc) of type 1 chain (beta-D-Gal-(1-&gt;3)-beta-D-GlcNAc) glycolipids and oligosaccharides via an alpha(1,4) linkage, and the subterminal glucose (Glc) or GlcNAc of type 2 chain (beta-D-Gal-(1-&gt;4)-beta-D-GlcNAc) oligosaccharides via an alpha(1,3) linkage, independently of the presence of terminal alpha-L-fucosyl-(1,2) moieties on the terminal galactose of these acceptors and participates in the blood groups Lewis determination and expression of Lewis a (Le(a)), lewis b (Le(b)), Lewis x/SSEA-1 (Le(x)) and lewis y (Le(y)) antigens. Also catalyzes the transfer of L-fucose to subterminal GlcNAc of sialyl- and disialyl-lactotetraosylceramide to produce sialyl Lewis a (sLe(a)) and disialyl Lewis a via an alpha(1,4) linkage and therefore may regulate cell surface sialyl Lewis a expression and consequently regulates adhesive properties to E-selectin, cell proliferation and migration. Catalyzes the transfer of an L-fucose to 3'-sialyl-N-acetyllactosamine by an alpha(1,3) linkage, which allows the formation of sialyl-Lewis x structure and therefore may regulate the sialyl-Lewis x surface antigen expression and consequently adhesive properties to E-selectin. Prefers type 1 chain over type 2 acceptors. Type 1 tetrasaccharide is a better acceptor than type 1 disaccharide suggesting that a beta anomeric configuration of GlcNAc in the substrate is preferred. Lewis-positive (Le(+)) individuals have an active enzyme while Lewis-negative (Le(-)) individuals have an inactive enzyme. In Pan troglodytes (Chimpanzee), this protein is 3-galactosyl-N-acetylglucosaminide 4-alpha-L-fucosyltransferase FUT3.